Reading from the N-terminus, the 423-residue chain is Deferrochelatase (423 aa).

The tat-type signal signal peptide spans 1–35; that stretch reads MQYEDENGVNEPSRRRLLKGIGALALAGSCPVAHA. Heme b contacts are provided by residues 236-238, His329, 334-336, and Arg347; these read GTA and NPR.

Belongs to the DyP-type peroxidase family. EfeB subfamily. Homodimer. Part of a ferrous iron transporter composed of EfeU, EfeO and EfeB. It depends on heme b as a cofactor. Post-translationally, predicted to be exported by the Tat system. The position of the signal peptide cleavage has not been experimentally proven.

It localises to the periplasm. The catalysed reaction is heme b + 2 H(+) = protoporphyrin IX + Fe(2+). Functionally, involved in the recovery of exogenous heme iron. Extracts iron from heme while preserving the protoporphyrin ring intact. This Escherichia coli O6:K15:H31 (strain 536 / UPEC) protein is Deferrochelatase (efeB).